The primary structure comprises 269 residues: MSSLQIILLLIIAAITGIASVLDEGQTHRPLVACTLVGLVLGDLKTGIILGGTLELMALGWMNVGLAMAPDTAIASVISTILVITADQGIGEGIAVAVALAAAGQALTIFVRTITVFFIHRADQYAKAGNIKGIEIMHITAMVFQALRVMIPTLIVALISVSAVQAFLGNIPDVITKGLQIGGGIIVVVGYAMVINMMNIPYLKPFFYIGFLLAAFTDFNLVGFGALGLCLALLYQQVMQKQSAHGAVAAASDSGSVAVYDDDDDDLDA.

One can recognise a PTS EIIC type-4 domain in the interval 1–234; that stretch reads MSSLQIILLL…GALGLCLALL (234 aa). Transmembrane regions (helical) follow at residues 2-22, 35-54, 64-86, 90-110, 149-169, 181-201, and 206-226; these read SSLQ…ASVL, TLVG…GGTL, VGLA…VITA, IGEG…LTIF, VMIP…AFLG, IGGG…MNIP, and FFYI…GFGA.

It localises to the cell membrane. In terms of biological role, the phosphoenolpyruvate-dependent sugar phosphotransferase system (PTS), a major carbohydrate active -transport system, catalyzes the phosphorylation of incoming sugar substrates concomitant with their translocation across the cell membrane. This system is involved in fructose transport. This chain is Fructose permease IIC component (levF), found in Bacillus subtilis (strain 168).